Consider the following 447-residue polypeptide: Trigger factor (447 aa).

Residues 164-249 (GNQVTFDFEG…VKLVEKSKLP (86 aa)) form the PPIase FKBP-type domain.

It belongs to the FKBP-type PPIase family. Tig subfamily.

The protein resides in the cytoplasm. It carries out the reaction [protein]-peptidylproline (omega=180) = [protein]-peptidylproline (omega=0). Its function is as follows. Involved in protein export. Acts as a chaperone by maintaining the newly synthesized protein in an open conformation. Functions as a peptidyl-prolyl cis-trans isomerase. The sequence is that of Trigger factor from Psychrobacter cryohalolentis (strain ATCC BAA-1226 / DSM 17306 / VKM B-2378 / K5).